The primary structure comprises 127 residues: Fluoride-specific ion channel FluC (127 aa).

A run of 4 helical transmembrane segments spans residues 4–24, 35–55, 71–91, and 103–123; these read TLLAVFIGGGVGSVARWQLGV, LGTLLANLIGAFVIGGALAFF, TGLCGGLTTFSTFSAEVVMFL, and VLLNLAGSLLMTALAFALVTW. The Na(+) site is built by Gly75 and Thr78.

It belongs to the fluoride channel Fluc/FEX (TC 1.A.43) family.

The protein resides in the cell inner membrane. It carries out the reaction fluoride(in) = fluoride(out). Its activity is regulated as follows. Na(+) is not transported, but it plays an essential structural role and its presence is essential for fluoride channel function. Functionally, fluoride-specific ion channel. Important for reducing fluoride concentration in the cell, thus reducing its toxicity. This is Fluoride-specific ion channel FluC from Pectobacterium atrosepticum (strain SCRI 1043 / ATCC BAA-672) (Erwinia carotovora subsp. atroseptica).